Reading from the N-terminus, the 400-residue chain is 3-phenylpropionate/cinnamic acid dioxygenase ferredoxin--NAD(+) reductase component (400 aa).

5-36 contributes to the FAD binding site; it reads TIIIVGGGQAAAMAAASLRQQGFTGELHLFSD. 146–174 contributes to the NAD(+) binding site; it reads SVVIVGAGTIGLELAASATQRRCKVTVIE.

Belongs to the bacterial ring-hydroxylating dioxygenase ferredoxin reductase family. As to quaternary structure, this dioxygenase system consists of four proteins: the two subunits of the hydroxylase component (HcaE and HcaF), a ferredoxin (HcaC) and a ferredoxin reductase (HcaD). It depends on FAD as a cofactor.

The enzyme catalyses 2 reduced [2Fe-2S]-[ferredoxin] + NAD(+) + H(+) = 2 oxidized [2Fe-2S]-[ferredoxin] + NADH. It functions in the pathway aromatic compound metabolism; 3-phenylpropanoate degradation. In terms of biological role, part of the multicomponent 3-phenylpropionate dioxygenase, that converts 3-phenylpropionic acid (PP) and cinnamic acid (CI) into 3-phenylpropionate-dihydrodiol (PP-dihydrodiol) and cinnamic acid-dihydrodiol (CI-dihydrodiol), respectively. This Escherichia coli (strain 55989 / EAEC) protein is 3-phenylpropionate/cinnamic acid dioxygenase ferredoxin--NAD(+) reductase component.